The sequence spans 584 residues: PE-PGRS family protein PE_PGRS11 (584 aa).

One can recognise a PE domain in the interval 1–92 (MSFVIVARDA…AATSYAVTEV (92 aa)). His-290 (tele-phosphohistidine intermediate) is an active-site residue. The active-site Proton donor/acceptor is the Glu-365. The phosphoglycerate mutase stretch occupies residues 384-584 (YLVGPIAWTL…LPIGLPSLIP (201 aa)).

The protein in the N-terminal section; belongs to the mycobacterial PE family. PGRS subfamily. In the C-terminal section; belongs to the phosphoglycerate mutase family. Interacts with human TLR2. Mg(2+) is required as a cofactor.

It localises to the secreted. The protein resides in the cell wall. The protein localises to the cell surface. The enzyme catalyses (2R)-2-phosphoglycerate = (2R)-3-phosphoglycerate. Its function is as follows. Induces maturation and activation of human dendritic cells (DCs), via TLR2-dependent activation of ERK1/2, p38 MAPK, and NF-kappa-B signaling pathways, and enhances the ability of DCs to stimulate CD4(+) T cells. By activating DCs, could potentially contribute to the initiation of innate immune responses during tuberculosis infection and hence regulate the clinical course of tuberculosis. Involved in resistance to oxidative stress, via TLR2-dependent activation of the PI3K-ERK1/2-NF-kappa-B signaling pathway and expression of COX-2 and Bcl2. Also abolishes H(2)O(2)-triggered activation of p38 MAPK. The polypeptide is PE-PGRS family protein PE_PGRS11 (Mycobacterium tuberculosis (strain ATCC 25618 / H37Rv)).